The following is a 773-amino-acid chain: Ribosomal protein S6 kinase alpha-4 (773 aa).

Positions 33–301 (FALLKVLGTG…AQEVKSHPFF (269 aa)) constitute a Protein kinase 1 domain. Residues 39–47 (LGTGAYGKV) and Lys-65 each bind ATP. Asp-161 acts as the Proton acceptor in catalysis. Ser-196 carries the phosphoserine; by autocatalysis modification. Residues 302–371 (QGLDWVALAA…VAPSILFDHN (70 aa)) enclose the AGC-kinase C-terminal domain. Phosphoserine; by MAPK1, MAPK3 and MAPK14 is present on Ser-343. At Ser-347 the chain carries Phosphoserine. Ser-360 and Ser-365 each carry phosphoserine; by autocatalysis. Residues 417 to 425 (LGQGSFSVC) and Lys-440 contribute to the ATP site. A Protein kinase 2 domain is found at 417–674 (LGQGSFSVCR…LEGLRSSSWL (258 aa)). The Proton acceptor role is filled by Asp-530. Thr-542 carries the post-translational modification Phosphothreonine. The residue at position 568 (Thr-568) is a Phosphothreonine; by MAPK1, MAPK3 and MAPK14. A phosphoserine mark is found at Ser-634 and Ser-678. Disordered regions lie at residues 674–696 (LQDG…SSGP) and 728–773 (AKRR…LSPS). A Phosphothreonine modification is found at Thr-687. Phosphoserine; by autocatalysis occurs at positions 737 and 745.

The protein belongs to the protein kinase superfamily. AGC Ser/Thr protein kinase family. S6 kinase subfamily. Forms a complex with either MAPK1/ERK2 or MAPK3/ERK1 in quiescent cells which transiently dissociates following mitogenic stimulation. Also associates with MAPK14/p38-alpha. Activated RPS6KA4 associates with and phosphorylates the NF-kappa-B p65 subunit RELA. It depends on Mg(2+) as a cofactor. Post-translationally, ser-343 and Thr-568 phosphorylation is required for kinase activity. Ser-343 and Ser-196 are autophosphorylated by the C-terminal kinase domain, and their phosphorylation is essential for the catalytic activity of the N-terminal kinase domain. Phosphorylated at Ser-343, Thr-568 and Thr-687 by MAPK1/ERK2, MAPK3/ERK1 and MAPK14/p38-alpha. Autophosphorylated at Ser-737 and Ser-745 by the N-terminal kinase domain.

The protein localises to the nucleus. It carries out the reaction L-seryl-[protein] + ATP = O-phospho-L-seryl-[protein] + ADP + H(+). The enzyme catalyses L-threonyl-[protein] + ATP = O-phospho-L-threonyl-[protein] + ADP + H(+). Its activity is regulated as follows. Activated by phosphorylation at Ser-343, Thr-568 and Thr-687 by MAPK1/ERK2, MAPK3/ERK1 and MAPK14/p38-alpha, and by further autophosphorylation of Ser-196, Ser-360 and Ser-365 by the activated C-terminal kinase domain. Serine/threonine-protein kinase that is required for the mitogen or stress-induced phosphorylation of the transcription factors CREB1 and ATF1 and for the regulation of the transcription factor RELA, and that contributes to gene activation by histone phosphorylation and functions in the regulation of inflammatory genes. Phosphorylates CREB1 and ATF1 in response to mitogenic or stress stimuli such as UV-C irradiation, epidermal growth factor (EGF) and anisomycin. Plays an essential role in the control of RELA transcriptional activity in response to TNF. Phosphorylates 'Ser-10' of histone H3 in response to mitogenics, stress stimuli and EGF, which results in the transcriptional activation of several immediate early genes, including proto-oncogenes c-fos/FOS and c-jun/JUN. May also phosphorylate 'Ser-28' of histone H3. Mediates the mitogen- and stress-induced phosphorylation of high mobility group protein 1 (HMGN1/HMG14). In lipopolysaccharide-stimulated primary macrophages, acts downstream of the Toll-like receptor TLR4 to limit the production of pro-inflammatory cytokines. Functions probably by inducing transcription of the MAP kinase phosphatase DUSP1 and the anti-inflammatory cytokine interleukin 10 (IL10), via CREB1 and ATF1 transcription factors. This Mus musculus (Mouse) protein is Ribosomal protein S6 kinase alpha-4 (Rps6ka4).